Reading from the N-terminus, the 163-residue chain is Adenosine 5'-monophosphoramidase HINT2 (163 aa).

A mitochondrion-targeting transit peptide spans M1–A17. Residues I55–G163 form the HIT domain. 2 residues coordinate AMP: S63 and D80. K119 bears the N6-acetyllysine mark. N136 is a binding site for AMP. Residue K139 is modified to N6-acetyllysine. AMP contacts are provided by residues A142–V145 and H149–H151. Residues H147–H151 carry the Histidine triad motif motif. The active-site Tele-AMP-histidine intermediate is the H149.

The protein belongs to the HINT family. High expression in liver and pancreas. Expression is significantly down-regulated in hepatocellular carcinoma (HCC) patients.

The protein localises to the mitochondrion. It catalyses the reaction adenosine 5'-phosphoramidate + H2O = AMP + NH4(+). Its function is as follows. Exhibits adenosine 5'-monophosphoramidase activity, hydrolyzing purine nucleotide phosphoramidates with a single phosphate group such as adenosine 5'monophosphoramidate (AMP-NH2) to yield AMP and NH2. Hydrolyzes adenosine 5'-O-p-nitrophenylphosphoramidate (AMP-pNA). Hydrolyzes fluorogenic purine nucleoside tryptamine phosphoramidates in vitro. May be involved in steroid biosynthesis. May play a role in apoptosis. In Homo sapiens (Human), this protein is Adenosine 5'-monophosphoramidase HINT2.